The following is a 324-amino-acid chain: Quinolinate synthase (324 aa).

Histidine 44 and serine 62 together coordinate iminosuccinate. Cysteine 107 lines the [4Fe-4S] cluster pocket. Iminosuccinate contacts are provided by residues 133-135 and serine 150; that span reads YVN. Cysteine 192 serves as a coordination point for [4Fe-4S] cluster. Residues 218-220 and threonine 235 each bind iminosuccinate; that span reads HPE. Residue cysteine 278 participates in [4Fe-4S] cluster binding.

It belongs to the quinolinate synthase family. Type 2 subfamily. The cofactor is [4Fe-4S] cluster.

Its subcellular location is the cytoplasm. It catalyses the reaction iminosuccinate + dihydroxyacetone phosphate = quinolinate + phosphate + 2 H2O + H(+). The protein operates within cofactor biosynthesis; NAD(+) biosynthesis; quinolinate from iminoaspartate: step 1/1. Its function is as follows. Catalyzes the condensation of iminoaspartate with dihydroxyacetone phosphate to form quinolinate. In Leptospira interrogans serogroup Icterohaemorrhagiae serovar copenhageni (strain Fiocruz L1-130), this protein is Quinolinate synthase.